Here is a 236-residue protein sequence, read N- to C-terminus: Phosphoribosylaminoimidazole-succinocarboxamide synthase (236 aa).

It belongs to the SAICAR synthetase family.

It carries out the reaction 5-amino-1-(5-phospho-D-ribosyl)imidazole-4-carboxylate + L-aspartate + ATP = (2S)-2-[5-amino-1-(5-phospho-beta-D-ribosyl)imidazole-4-carboxamido]succinate + ADP + phosphate + 2 H(+). The protein operates within purine metabolism; IMP biosynthesis via de novo pathway; 5-amino-1-(5-phospho-D-ribosyl)imidazole-4-carboxamide from 5-amino-1-(5-phospho-D-ribosyl)imidazole-4-carboxylate: step 1/2. The polypeptide is Phosphoribosylaminoimidazole-succinocarboxamide synthase (Pseudomonas syringae pv. syringae (strain B728a)).